Reading from the N-terminus, the 111-residue chain is X antigen family member 2 (111 aa).

2 disordered regions span residues 1–61 (MSWR…AAEI) and 77–111 (KTGD…KSQV). Residues 86-111 (TDVKGKILPKAEHFKMPEAGEGKSQV) show a composition bias toward basic and acidic residues.

The protein belongs to the GAGE family.

The protein is X antigen family member 2 (XAGE2) of Homo sapiens (Human).